The chain runs to 319 residues: Ribonucleoside-diphosphate reductase small chain (319 aa).

Residues aspartate 70, glutamate 101, and histidine 104 each contribute to the Fe cation site. Tyrosine 108 is an active-site residue. Fe cation contacts are provided by glutamate 163, glutamate 197, and histidine 200. The interaction with R1 stretch occupies residues 313-319 (FSLDVDF).

Belongs to the ribonucleoside diphosphate reductase small chain family. In terms of assembly, interacts with RNR1/OPG080 subunit. Can interact with host RNR1 supunit. It depends on Fe cation as a cofactor.

It catalyses the reaction a 2'-deoxyribonucleoside 5'-diphosphate + [thioredoxin]-disulfide + H2O = a ribonucleoside 5'-diphosphate + [thioredoxin]-dithiol. Ribonucleoside-diphosphate reductase holoenzyme provides the precursors necessary for viral DNA synthesis. Allows virus growth in non-dividing cells. Catalyzes the biosynthesis of deoxyribonucleotides from the corresponding ribonucleotides. In Homo sapiens (Human), this protein is Ribonucleoside-diphosphate reductase small chain (OPG048).